The following is a 478-amino-acid chain: Protein ZINC INDUCED FACILITATOR-LIKE 1 (478 aa).

12 helical membrane passes run 43-63 (IIVLCTALPISSLFPFLYFMI), 81-101 (FVGCSFMLGRAFTSVAWGLVA), 108-128 (PVILIGTASVVVFNTLFGLSL), 130-150 (FWMAIITRFCLGSFNGLLGPI), 169-189 (AVSTAWGIGLIIGPAIGGFLA), 208-228 (FPFFLPCLAISVFAFLVTIVS), 280-300 (IIVYCVFSLHDMAYTEIFSLW), 317-337 (VGSVLAFSGFGLLIFQLSLYS), 346-367 (IIVTRISGSLAMVVLSCYPLIA), 378-398 (VTSASVAKSVLGTSAITGLFI), 415-435 (IAMTAMSLFKAIGPAAAGIIF), and 453-473 (VFFILNVVLALGVVLTFKPFL).

Belongs to the major facilitator superfamily. As to expression, predominantly expressed in roots and stomatal guard cells. Detected in anther stamen filaments and shoot apical meristem. In the mature portion of roots, restricted to the cortex. At the root tip, highly expressed in both the cortical and epidermal cell layers of the apical meristem and the transition zone, while absent from the quiescent center or the columella cells. Not detected in lateral root primordia.

It is found in the cell membrane. The protein resides in the vacuole membrane. Functionally, major facilitator superfamily (MFS) transporter probably involved in 2,4-dichlorophenoxyacetic acid (2,4-D) export. K(+) may be the physiological substrate of the transporter. Its function is as follows. Modulates root auxin-related processes. Involved in auxin efflux and acts as a positive regulator of shootward transport at the root apex. May mediate proton efflux from the vacuolar compartment. Mediates drought stress tolerance by regulating stomatal closure. This is Protein ZINC INDUCED FACILITATOR-LIKE 1 (ZIFL1) from Arabidopsis thaliana (Mouse-ear cress).